The chain runs to 325 residues: Beta-ketoacyl-[acyl-carrier-protein] synthase III (325 aa).

Residues cysteine 113 and histidine 250 contribute to the active site. The ACP-binding stretch occupies residues 251–255 (QANIR). Residue asparagine 280 is part of the active site.

This sequence belongs to the thiolase-like superfamily. FabH family. Homodimer.

It localises to the cytoplasm. The enzyme catalyses malonyl-[ACP] + acetyl-CoA + H(+) = 3-oxobutanoyl-[ACP] + CO2 + CoA. It functions in the pathway lipid metabolism; fatty acid biosynthesis. In terms of biological role, catalyzes the condensation reaction of fatty acid synthesis by the addition to an acyl acceptor of two carbons from malonyl-ACP. Catalyzes the first condensation reaction which initiates fatty acid synthesis and may therefore play a role in governing the total rate of fatty acid production. Possesses both acetoacetyl-ACP synthase and acetyl transacylase activities. Its substrate specificity determines the biosynthesis of branched-chain and/or straight-chain of fatty acids. In Streptococcus suis (strain 98HAH33), this protein is Beta-ketoacyl-[acyl-carrier-protein] synthase III.